The sequence spans 586 residues: Phosphatase and actin regulator 1 (586 aa).

A Nuclear localization signal motif is present at residues 62–83; it reads RRRSKFATLGRLFKPWKWRKKK. Residues 92-117 form an RPEL 1 repeat; sequence AALERKISMRQSREELIKRGVLKEMY. The disordered stretch occupies residues 373–414; that stretch reads ECEDDKENVPHETSYDDSSCLYSRDEEEDDDDDDDDEDDDSS. Acidic residues predominate over residues 397–413; it reads DEEEDDDDDDDDEDDDS. 3 RPEL repeats span residues 428–453, 466–491, and 504–529; these read DSLA…PMQT, TKLT…KPRN, and RRLT…ISFS.

It belongs to the phosphatase and actin regulator family. Interacts (via RPEL repeats) with ACTA1.

Its subcellular location is the cytoplasm. It localises to the synapse. It is found in the nucleus. In terms of biological role, binds actin monomers (G actin) and plays a role in the reorganization of the actin cytoskeleton and in formation of actin stress fibers. In Xenopus laevis (African clawed frog), this protein is Phosphatase and actin regulator 1 (phactr1).